Here is a 95-residue protein sequence, read N- to C-terminus: Co-chaperonin GroES (95 aa).

It belongs to the GroES chaperonin family. In terms of assembly, heptamer of 7 subunits arranged in a ring. Interacts with the chaperonin GroEL.

It is found in the cytoplasm. Together with the chaperonin GroEL, plays an essential role in assisting protein folding. The GroEL-GroES system forms a nano-cage that allows encapsulation of the non-native substrate proteins and provides a physical environment optimized to promote and accelerate protein folding. GroES binds to the apical surface of the GroEL ring, thereby capping the opening of the GroEL channel. This Jannaschia sp. (strain CCS1) protein is Co-chaperonin GroES.